The sequence spans 251 residues: Ubiquinone/menaquinone biosynthesis C-methyltransferase UbiE (251 aa).

Residues Thr74, Asp95, 123 to 124 (NA), and Ser140 contribute to the S-adenosyl-L-methionine site.

The protein belongs to the class I-like SAM-binding methyltransferase superfamily. MenG/UbiE family.

The catalysed reaction is a 2-demethylmenaquinol + S-adenosyl-L-methionine = a menaquinol + S-adenosyl-L-homocysteine + H(+). It catalyses the reaction a 2-methoxy-6-(all-trans-polyprenyl)benzene-1,4-diol + S-adenosyl-L-methionine = a 5-methoxy-2-methyl-3-(all-trans-polyprenyl)benzene-1,4-diol + S-adenosyl-L-homocysteine + H(+). Its pathway is quinol/quinone metabolism; menaquinone biosynthesis; menaquinol from 1,4-dihydroxy-2-naphthoate: step 2/2. It functions in the pathway cofactor biosynthesis; ubiquinone biosynthesis. Methyltransferase required for the conversion of demethylmenaquinol (DMKH2) to menaquinol (MKH2) and the conversion of 2-polyprenyl-6-methoxy-1,4-benzoquinol (DDMQH2) to 2-polyprenyl-3-methyl-6-methoxy-1,4-benzoquinol (DMQH2). This Yersinia pestis bv. Antiqua (strain Angola) protein is Ubiquinone/menaquinone biosynthesis C-methyltransferase UbiE.